The following is a 732-amino-acid chain: Protein kinase YpkA (732 aa).

Residues 136–408 enclose the Protein kinase domain; sequence VAETDKFAEG…SNEARLHEFL (273 aa). ATP contacts are provided by residues 142 to 150 and Lys163; that span reads FAEGESHIS. Asp270 functions as the Proton acceptor in the catalytic mechanism.

The protein belongs to the protein kinase superfamily. Ser/Thr protein kinase family.

Its subcellular location is the secreted. The catalysed reaction is L-seryl-[protein] + ATP = O-phospho-L-seryl-[protein] + ADP + H(+). The enzyme catalyses L-threonyl-[protein] + ATP = O-phospho-L-threonyl-[protein] + ADP + H(+). Its function is as follows. Acts as a virulence determinant. The sequence is that of Protein kinase YpkA (ypkA) from Yersinia pestis.